Reading from the N-terminus, the 562-residue chain is 4-coumarate--CoA ligase-like 9 (562 aa).

Residues S212, S213, G214, T215, T216, and K220 each contribute to the ATP site. R281 serves as a coordination point for CoA. The tract at residues 283-352 is SBD1; sequence ELEAMFKAVE…QKFPDVDIVQ (70 aa). ATP is bound by residues Q352, G353, T357, D438, and R453. An SBD2 region spans residues 353–417; the sequence is GYGLTESSGP…LRGPVIMKGY (65 aa). Residues K461 and A462 each coordinate CoA. K544 contacts ATP. A Microbody targeting signal motif is present at residues 560-562; sequence SKL.

This sequence belongs to the ATP-dependent AMP-binding enzyme family. It depends on Mg(2+) as a cofactor. Expressed at low level in leaves.

It is found in the peroxisome. It carries out the reaction (9S,13S,15Z)-12-oxophyto-10,15-dienoate + ATP + CoA = (10Z,15Z)-12-oxophytodienoyl-CoA + AMP + diphosphate. The catalysed reaction is hexadecanoate + ATP + CoA = hexadecanoyl-CoA + AMP + diphosphate. It catalyses the reaction (9Z)-octadecenoate + ATP + CoA = (9Z)-octadecenoyl-CoA + AMP + diphosphate. The enzyme catalyses octadecanoate + ATP + CoA = octadecanoyl-CoA + AMP + diphosphate. It carries out the reaction tetradecanoate + ATP + CoA = tetradecanoyl-CoA + AMP + diphosphate. The catalysed reaction is dodecanoate + ATP + CoA = dodecanoyl-CoA + AMP + diphosphate. It catalyses the reaction decanoate + ATP + CoA = decanoyl-CoA + AMP + diphosphate. The enzyme catalyses octanoate + ATP + CoA = octanoyl-CoA + AMP + diphosphate. It carries out the reaction (9Z,12Z)-octadecadienoate + ATP + CoA = (9Z,12Z)-octadecadienoyl-CoA + AMP + diphosphate. The catalysed reaction is (9Z,12Z,15Z)-octadecatrienoate + ATP + CoA = (9Z,12Z,15Z)-octadecatrienoyl-CoA + AMP + diphosphate. It catalyses the reaction nonanoate + ATP + CoA = nonanoyl-CoA + AMP + diphosphate. Its function is as follows. Contributes to jasmonic acid biosynthesis by initiating the beta-oxidative chain shortening of its precursors. Converts 12-oxo-phytodienoic acid (OPDA) into OPDA-CoA. Follows a two-step reaction mechanism, wherein the carboxylate substrate first undergoes adenylation by ATP, followed by a thioesterification in the presence of CoA to yield the final CoA thioester. The chain is 4-coumarate--CoA ligase-like 9 from Arabidopsis thaliana (Mouse-ear cress).